The primary structure comprises 196 residues: Indolepyruvate oxidoreductase subunit IorB (196 aa).

As to quaternary structure, heterodimer of the IorA and IorB subunits.

It catalyses the reaction indole-3-pyruvate + 2 oxidized [2Fe-2S]-[ferredoxin] + CoA = (indol-3-yl)acetyl-CoA + 2 reduced [2Fe-2S]-[ferredoxin] + CO2 + H(+). In terms of biological role, catalyzes the ferredoxin-dependent oxidative decarboxylation of arylpyruvates. The sequence is that of Indolepyruvate oxidoreductase subunit IorB (iorB) from Methanothermobacter thermautotrophicus (strain ATCC 29096 / DSM 1053 / JCM 10044 / NBRC 100330 / Delta H) (Methanobacterium thermoautotrophicum).